A 403-amino-acid chain; its full sequence is S-adenosylmethionine synthase (403 aa).

H17 lines the ATP pocket. A Mg(2+)-binding site is contributed by D19. Residue E45 coordinates K(+). Residues E58 and Q104 each coordinate L-methionine. The segment at 104–114 is flexible loop; sequence QSPDIAQGVDT. ATP is bound by residues 179 to 181, 250 to 251, D259, 265 to 266, A282, and K286; these read DGK, KF, and RK. D259 lines the L-methionine pocket. K290 contributes to the L-methionine binding site.

The protein belongs to the AdoMet synthase family. As to quaternary structure, homotetramer; dimer of dimers. Mg(2+) serves as cofactor. It depends on K(+) as a cofactor.

The protein localises to the cytoplasm. It carries out the reaction L-methionine + ATP + H2O = S-adenosyl-L-methionine + phosphate + diphosphate. It functions in the pathway amino-acid biosynthesis; S-adenosyl-L-methionine biosynthesis; S-adenosyl-L-methionine from L-methionine: step 1/1. Its function is as follows. Catalyzes the formation of S-adenosylmethionine (AdoMet) from methionine and ATP. The overall synthetic reaction is composed of two sequential steps, AdoMet formation and the subsequent tripolyphosphate hydrolysis which occurs prior to release of AdoMet from the enzyme. In Mycobacterium marinum (strain ATCC BAA-535 / M), this protein is S-adenosylmethionine synthase.